A 241-amino-acid chain; its full sequence is Adapter protein MecA (241 aa).

Residues 115–141 are disordered; that stretch reads TDSNDKNNDDSSYMSDGNPADLNGYAN.

Belongs to the MecA family. As to quaternary structure, homodimer.

Its function is as follows. Enables the recognition and targeting of unfolded and aggregated proteins to the ClpC protease or to other proteins involved in proteolysis. This is Adapter protein MecA from Pediococcus pentosaceus (strain ATCC 25745 / CCUG 21536 / LMG 10740 / 183-1w).